Here is a 679-residue protein sequence, read N- to C-terminus: Glycine--tRNA ligase beta subunit (679 aa).

The protein belongs to the class-II aminoacyl-tRNA synthetase family. As to quaternary structure, tetramer of two alpha and two beta subunits.

Its subcellular location is the cytoplasm. The enzyme catalyses tRNA(Gly) + glycine + ATP = glycyl-tRNA(Gly) + AMP + diphosphate. The protein is Glycine--tRNA ligase beta subunit of Streptococcus pyogenes serotype M28 (strain MGAS6180).